A 605-amino-acid polypeptide reads, in one-letter code: Beta-hexosaminidase ARB_07893 (605 aa).

The N-terminal stretch at Met1–Ala18 is a signal peptide. A glycan (N-linked (GlcNAc...) asparagine) is linked at Asn30. Glu293 functions as the Nucleophile in the catalytic mechanism. An N-linked (GlcNAc...) asparagine glycan is attached at Asn342. The Proton donor role is filled by Glu374. N-linked (GlcNAc...) asparagine glycosylation is present at Asn449.

Belongs to the glycosyl hydrolase 20 family.

Its subcellular location is the secreted. The enzyme catalyses Hydrolysis of terminal non-reducing N-acetyl-D-hexosamine residues in N-acetyl-beta-D-hexosaminides.. Functionally, beta-hexosaminidase that shows a broad substrate specificity. The polypeptide is Beta-hexosaminidase ARB_07893 (Arthroderma benhamiae (strain ATCC MYA-4681 / CBS 112371) (Trichophyton mentagrophytes)).